Here is a 271-residue protein sequence, read N- to C-terminus: Undecaprenyl-diphosphatase (271 aa).

8 consecutive transmembrane segments (helical) span residues 2-22, 42-62, 80-100, 108-128, 149-168, 175-195, 214-234, and 248-268; these read LLIL…FVPV, ANLF…VVYW, LRFW…GFSL, LFNP…MIIV, SIFV…SRSA, WIAG…AIPV, IEFI…LVVI, and IFAI…IFKI.

It belongs to the UppP family.

It localises to the cell membrane. The catalysed reaction is di-trans,octa-cis-undecaprenyl diphosphate + H2O = di-trans,octa-cis-undecaprenyl phosphate + phosphate + H(+). In terms of biological role, catalyzes the dephosphorylation of undecaprenyl diphosphate (UPP). Confers resistance to bacitracin. The sequence is that of Undecaprenyl-diphosphatase from Clostridium tetani (strain Massachusetts / E88).